The sequence spans 257 residues: Acetylglutamate kinase (257 aa).

Substrate is bound by residues 41–42, Arg-63, and Asn-158; that span reads GG.

Belongs to the acetylglutamate kinase family. ArgB subfamily.

It localises to the cytoplasm. The catalysed reaction is N-acetyl-L-glutamate + ATP = N-acetyl-L-glutamyl 5-phosphate + ADP. Its pathway is amino-acid biosynthesis; L-arginine biosynthesis; N(2)-acetyl-L-ornithine from L-glutamate: step 2/4. In terms of biological role, catalyzes the ATP-dependent phosphorylation of N-acetyl-L-glutamate. The chain is Acetylglutamate kinase from Bacteroides thetaiotaomicron (strain ATCC 29148 / DSM 2079 / JCM 5827 / CCUG 10774 / NCTC 10582 / VPI-5482 / E50).